The chain runs to 130 residues: Type VII secretion system extracellular protein C (130 aa).

This sequence belongs to the EsxC family. In terms of assembly, forms both homodimers and heterodimers with EsxA. Homodimerization is calcium-dependent.

The protein localises to the secreted. Implements its pathogenic function during infection. In Staphylococcus aureus (strain Mu50 / ATCC 700699), this protein is Type VII secretion system extracellular protein C.